Consider the following 427-residue polypeptide: Glutamate-1-semialdehyde 2,1-aminomutase (427 aa).

Lys267 bears the N6-(pyridoxal phosphate)lysine mark.

It belongs to the class-III pyridoxal-phosphate-dependent aminotransferase family. HemL subfamily. Homodimer. It depends on pyridoxal 5'-phosphate as a cofactor.

It is found in the cytoplasm. It catalyses the reaction (S)-4-amino-5-oxopentanoate = 5-aminolevulinate. It functions in the pathway porphyrin-containing compound metabolism; protoporphyrin-IX biosynthesis; 5-aminolevulinate from L-glutamyl-tRNA(Glu): step 2/2. The polypeptide is Glutamate-1-semialdehyde 2,1-aminomutase (Syntrophotalea carbinolica (strain DSM 2380 / NBRC 103641 / GraBd1) (Pelobacter carbinolicus)).